A 300-amino-acid chain; its full sequence is Small ribosomal subunit protein uS2 (300 aa).

Positions 228 to 300 are disordered; the sequence is RAGLSADKDA…PAAEAPSTEA (73 aa). Over residues 258–300 the composition is skewed to low complexity; that stretch reads AAPAAEAAPAAEAAPAAEAAPAAEAQAAPAAEAPAAEAPSTEA.

The protein belongs to the universal ribosomal protein uS2 family.

The chain is Small ribosomal subunit protein uS2 from Rhodococcus jostii (strain RHA1).